A 430-amino-acid polypeptide reads, in one-letter code: tRNA pseudouridine synthase Pus10 (430 aa).

The active-site Nucleophile is the Asp253. Residues Tyr320 and Tyr392 each contribute to the substrate site.

It belongs to the pseudouridine synthase Pus10 family.

The enzyme catalyses uridine(54) in tRNA = pseudouridine(54) in tRNA. It catalyses the reaction uridine(55) in tRNA = pseudouridine(55) in tRNA. In terms of biological role, responsible for synthesis of pseudouridine from uracil-54 and uracil-55 in the psi GC loop of transfer RNAs. The chain is tRNA pseudouridine synthase Pus10 from Ignisphaera aggregans (strain DSM 17230 / JCM 13409 / AQ1.S1).